Here is a 219-residue protein sequence, read N- to C-terminus: Response regulator ArlR (219 aa).

The region spanning 3 to 116 (NILIVEDEQN…ELFARIRAVL (114 aa)) is the Response regulatory domain. Asp52 bears the 4-aspartylphosphate mark. The segment at residues 122-219 (KDIIDINGIK…TVRGVGYVIR (98 aa)) is a DNA-binding region (ompR/PhoB-type).

In terms of processing, phosphorylated by ArlS.

The protein resides in the cytoplasm. In terms of biological role, member of the two-component regulatory system ArlS/ArlR. In Staphylococcus haemolyticus (strain JCSC1435), this protein is Response regulator ArlR (arlR).